The sequence spans 80 residues: Exodeoxyribonuclease 7 small subunit (80 aa).

This sequence belongs to the XseB family. In terms of assembly, heterooligomer composed of large and small subunits.

Its subcellular location is the cytoplasm. The catalysed reaction is Exonucleolytic cleavage in either 5'- to 3'- or 3'- to 5'-direction to yield nucleoside 5'-phosphates.. In terms of biological role, bidirectionally degrades single-stranded DNA into large acid-insoluble oligonucleotides, which are then degraded further into small acid-soluble oligonucleotides. The chain is Exodeoxyribonuclease 7 small subunit from Cronobacter sakazakii (strain ATCC BAA-894) (Enterobacter sakazakii).